The following is a 335-amino-acid chain: Anthranilate phosphoribosyltransferase (335 aa).

5-phospho-alpha-D-ribose 1-diphosphate is bound by residues glycine 79, glycine 82–aspartate 83, threonine 87, asparagine 89–threonine 92, lysine 107–serine 115, and serine 119. Anthranilate is bound at residue glycine 79. Serine 91 is a Mg(2+) binding site. Arginine 165 is an anthranilate binding site. Mg(2+) is bound by residues aspartate 223 and glutamate 224.

It belongs to the anthranilate phosphoribosyltransferase family. As to quaternary structure, homodimer. Mg(2+) serves as cofactor.

It catalyses the reaction N-(5-phospho-beta-D-ribosyl)anthranilate + diphosphate = 5-phospho-alpha-D-ribose 1-diphosphate + anthranilate. It participates in amino-acid biosynthesis; L-tryptophan biosynthesis; L-tryptophan from chorismate: step 2/5. Functionally, catalyzes the transfer of the phosphoribosyl group of 5-phosphorylribose-1-pyrophosphate (PRPP) to anthranilate to yield N-(5'-phosphoribosyl)-anthranilate (PRA). This is Anthranilate phosphoribosyltransferase from Helicobacter pylori (strain G27).